The following is a 769-amino-acid chain: Serine/threonine-protein kinase PLK4 (769 aa).

Residues 14–267 (YEVQHLLGKG…LEAVLCHPFM (254 aa)) form the Protein kinase domain. ATP-binding positions include 20-28 (LGKGGFATV) and lysine 43. Aspartate 138 functions as the Proton acceptor in the catalytic mechanism. The 118-residue stretch at 381-498 (EDRISVPPLN…ARFVGLVKSK (118 aa)) folds into the Cryptic POLO box 1 (CPB1) domain. Residues 499 to 602 (TPKVTYFSTL…GRRPITDVQP (104 aa)) enclose the Cryptic POLO box 2 (CPB2) domain. A POLO box domain is found at 660 to 739 (PIKRINVPDI…IPNIQLKLKT (80 aa)).

The protein belongs to the protein kinase superfamily. Ser/Thr protein kinase family. CDC5/Polo subfamily. Homodimer. In terms of processing, ubiquitinated by the SCF(Slimb) ubiquitin ligase complex; leading to its degradation by the proteasome during interphase and regulating centriole number and ensuring the block to centriole reduplication.

The protein localises to the cytoplasm. The protein resides in the cytoskeleton. Its subcellular location is the microtubule organizing center. It localises to the centrosome. It is found in the centriole. It catalyses the reaction L-seryl-[protein] + ATP = O-phospho-L-seryl-[protein] + ADP + H(+). The enzyme catalyses L-threonyl-[protein] + ATP = O-phospho-L-threonyl-[protein] + ADP + H(+). Its function is as follows. Serine/threonine-protein kinase that plays a central role in centriole duplication. Able to trigger procentriole formation on the surface of the mother centriole cylinder, using mother centriole as a platform, leading to the recruitment of centriole biogenesis proteins such as sas-6. When overexpressed, it is able to induce centrosome amplification through the simultaneous generation of multiple procentrioles adjoining each parental centriole during S phase. Centrosome amplification following overexpression can initiate tumorigenesis, highlighting the importance of centrosome regulation in cancers. The chain is Serine/threonine-protein kinase PLK4 (SAK) from Drosophila simulans (Fruit fly).